Here is a 381-residue protein sequence, read N- to C-terminus: CCN family member 1 (381 aa).

The signal sequence occupies residues 1–24 (MSSRIARALALVVTLLHLTRLALS). In terms of domain architecture, IGFBP N-terminal spans 25 to 94 (TCPAACHCPL…TALKGICRAQ (70 aa)). Disulfide bonds link Cys-26–Cys-50, Cys-30–Cys-52, Cys-32–Cys-53, Cys-39–Cys-56, Cys-64–Cys-78, and Cys-70–Cys-91. The 67-residue stretch at 98-164 (RPCEYNSRIY…GQCCEEWVCD (67 aa)) folds into the VWFC domain. Ser-188 carries the phosphoserine modification. The TSP type-1 domain maps to 228–273 (KCIVQTTSWSQCSKTCGTGISTRVTNDNPECRLVKETRICEVRPCG). The segment at 279–315 (SLKKGKKCSKTKKSPEPVRFTYAGCLSVKKYRPKYCG) is heparin-binding. 5 cysteine pairs are disulfide-bonded: Cys-286–Cys-323, Cys-303–Cys-337, Cys-314–Cys-353, Cys-317–Cys-355, and Cys-322–Cys-359. Positions 286–360 (CSKTKKSPEP…QSCKCNYNCP (75 aa)) constitute a CTCK domain.

The protein belongs to the CCN family. In terms of assembly, interaction with integrins is heparin- and cell-type-dependent and promotes cell adhesion.

The protein resides in the secreted. Its function is as follows. Promotes cell proliferation, chemotaxis, angiogenesis and cell adhesion. Appears to play a role in wound healing by up-regulating, in skin fibroblasts, the expression of a number of genes involved in angiogenesis, inflammation and matrix remodeling including VEGA-A, VEGA-C, MMP1, MMP3, TIMP1, uPA, PAI-1 and integrins alpha-3 and alpha-5. CCN1-mediated gene regulation is dependent on heparin-binding. Down-regulates the expression of alpha-1 and alpha-2 subunits of collagen type-1. Promotes cell adhesion and adhesive signaling through integrin alpha-6/beta-1, cell migration through integrin alpha-1/beta-5 and cell proliferation through integrin alpha-v/beta-3. The sequence is that of CCN family member 1 (CCN1) from Pan troglodytes (Chimpanzee).